Consider the following 157-residue polypeptide: MLRNRTDAVHDRVRFSIGTRVMSSWSIVVWMFHRQTWQFLLTTGFILCISSIAWSAEVHQMELTHHEFEPWSFVPKPGDRIDIHNHSDIVHAIYVTYPNGIVVNLSETAAQLPGMTVSWTVPEDAEDGDEYVLQCWIHTIIRAALKVKAPLSQLPEP.

The protein operates within one-carbon metabolism; methylamine degradation. Its function is as follows. Probably involved in TTQ prosthetic group biosynthesis. The polypeptide is Methylamine utilization protein MauL (mauL) (Methylobacillus flagellatus (strain ATCC 51484 / DSM 6875 / VKM B-1610 / KT)).